Here is a 238-residue protein sequence, read N- to C-terminus: Probable transcriptional regulatory protein CTA_0499 (238 aa).

A disordered region spans residues 1 to 21 (MAGHSKWANTKHRKERADHKK). Residues 9-21 (NTKHRKERADHKK) are compositionally biased toward basic residues.

The protein belongs to the TACO1 family.

Its subcellular location is the cytoplasm. The sequence is that of Probable transcriptional regulatory protein CTA_0499 from Chlamydia trachomatis serovar A (strain ATCC VR-571B / DSM 19440 / HAR-13).